The primary structure comprises 311 residues: 4-hydroxy-tetrahydrodipicolinate synthase (311 aa).

T51 contributes to the pyruvate binding site. Y140 acts as the Proton donor/acceptor in catalysis. K168 functions as the Schiff-base intermediate with substrate in the catalytic mechanism. I209 provides a ligand contact to pyruvate.

This sequence belongs to the DapA family. In terms of assembly, homotetramer; dimer of dimers.

The protein localises to the cytoplasm. It carries out the reaction L-aspartate 4-semialdehyde + pyruvate = (2S,4S)-4-hydroxy-2,3,4,5-tetrahydrodipicolinate + H2O + H(+). It participates in amino-acid biosynthesis; L-lysine biosynthesis via DAP pathway; (S)-tetrahydrodipicolinate from L-aspartate: step 3/4. Catalyzes the condensation of (S)-aspartate-beta-semialdehyde [(S)-ASA] and pyruvate to 4-hydroxy-tetrahydrodipicolinate (HTPA). This Streptococcus pneumoniae (strain Taiwan19F-14) protein is 4-hydroxy-tetrahydrodipicolinate synthase.